A 346-amino-acid polypeptide reads, in one-letter code: Blue-light-activated histidine kinase 2 (346 aa).

The PAS domain maps to His-8–Glu-82. Cys-55 carries the S-4a-FMN cysteine modification. A PAC domain is found at Glu-79–Leu-133. Residues Glu-139–Gln-334 form the Histidine kinase domain. His-142 carries the post-translational modification Phosphohistidine; by autocatalysis.

In terms of processing, FMN binds covalently to cysteine after exposure to blue light and this bond is spontaneously broken in the dark.

The catalysed reaction is ATP + protein L-histidine = ADP + protein N-phospho-L-histidine.. Photosensitive kinase that is involved in increased bacterial virulence upon exposure to light. The sequence is that of Blue-light-activated histidine kinase 2 from Erythrobacter litoralis (strain HTCC2594).